A 277-amino-acid chain; its full sequence is Hemin import ATP-binding protein HmuV (277 aa).

In terms of domain architecture, ABC transporter spans 19–259; the sequence is VEVADLNYSV…AIIEEAFGHR (241 aa). An ATP-binding site is contributed by 51–58; sequence GRNGAGKS.

The protein belongs to the ABC transporter superfamily. Heme (hemin) importer (TC 3.A.1.14.5) family. In terms of assembly, the complex is composed of two ATP-binding proteins (HmuV), two transmembrane proteins (HmuU) and a solute-binding protein (HmuT).

It localises to the cell membrane. In terms of biological role, part of the ABC transporter complex HmuTUV involved in hemin import. Responsible for energy coupling to the transport system. The polypeptide is Hemin import ATP-binding protein HmuV (Deinococcus geothermalis (strain DSM 11300 / CIP 105573 / AG-3a)).